The sequence spans 357 residues: Homoarginine-6-hydroxylase 2-ODD-C23.2 (357 aa).

In terms of domain architecture, Fe2OG dioxygenase spans 208-308 (PFWVMRIIGY…RVCVAFFYET (101 aa)). The Fe cation site is built by His231, Asp233, and His289. Arg299 is a binding site for 2-oxoglutarate.

The protein belongs to the iron/ascorbate-dependent oxidoreductase family. The cofactor is Fe(2+). In terms of tissue distribution, expressed in senescent leaves.

The protein resides in the cytoplasm. It localises to the cytosol. The enzyme catalyses L-homoarginine + 2-oxoglutarate + O2 = 6-hydroxy-L-homoarginine + succinate + CO2. It catalyses the reaction L-arginine + 2-oxoglutarate + O2 = 5-hydroxy-L-arginine + succinate + CO2. With respect to regulation, slightly inhibited by canavanine (Can), the 5-oxa-analog of arginine. 2-oxoglutarate-dependent dioxygenase catalyzing homoarginine 6-hydroxylation and arginine-5-hydroxylation thus producing 6-hydroxy-L-homoarginine and 5-hydroxy-L-arginine, respectively. Guanidine (Gd) is in turn synthesized by the spontaneous conversion of 6-hydroxy-L-homoarginine and 5-hydroxy-L-arginine to (S)-2-amino-6-oxohexanoate (RHEA:79843) and L-glutamate 5-semialdehyde (RHEA:31527); guanidine is a nitrogen-rich compound that may serve as a defense or signaling substance. In Arabidopsis thaliana (Mouse-ear cress), this protein is Homoarginine-6-hydroxylase 2-ODD-C23.2.